We begin with the raw amino-acid sequence, 778 residues long: Endonuclease MutS2 (778 aa).

An ATP-binding site is contributed by 328–335; the sequence is GPNTGGKT. A Smr domain is found at 702 to 777; the sequence is LDLRGKRYEE…GSGATIVTFK (76 aa).

This sequence belongs to the DNA mismatch repair MutS family. MutS2 subfamily. Homodimer. Binds to stalled ribosomes, contacting rRNA.

In terms of biological role, endonuclease that is involved in the suppression of homologous recombination and thus may have a key role in the control of bacterial genetic diversity. Acts as a ribosome collision sensor, splitting the ribosome into its 2 subunits. Detects stalled/collided 70S ribosomes which it binds and splits by an ATP-hydrolysis driven conformational change. Acts upstream of the ribosome quality control system (RQC), a ribosome-associated complex that mediates the extraction of incompletely synthesized nascent chains from stalled ribosomes and their subsequent degradation. Probably generates substrates for RQC. The polypeptide is Endonuclease MutS2 (Streptococcus pneumoniae (strain Taiwan19F-14)).